The chain runs to 810 residues: Protein kinase C-binding protein NELL1 (810 aa).

The N-terminal stretch at Met-1–Gly-21 is a signal peptide. N-linked (GlcNAc...) asparagine glycans are attached at residues Asn-40, Asn-53, Asn-83, Asn-224, Asn-294, and Asn-372. In terms of domain architecture, Laminin G-like spans Ala-57–Cys-227. In terms of domain architecture, VWFC 1 spans Lys-271–Arg-332. 3 disulfides stabilise this stretch: Cys-395–Cys-407, Cys-401–Cys-416, and Cys-418–Cys-432. Positions 434, 435, and 437 each coordinate Ca(2+). Positions Asp-434 to Thr-475 constitute an EGF-like 1; calcium-binding domain. 15 disulfide bridges follow: Cys-438–Cys-451, Cys-445–Cys-460, Cys-462–Cys-474, Cys-480–Cys-493, Cys-487–Cys-502, Cys-504–Cys-515, Cys-519–Cys-529, Cys-523–Cys-535, Cys-537–Cys-546, Cys-553–Cys-566, Cys-560–Cys-575, Cys-577–Cys-594, Cys-600–Cys-613, Cys-607–Cys-622, and Cys-624–Cys-630. Residues Asn-453, Leu-454, and Leu-457 each coordinate Ca(2+). The EGF-like 2; calcium-binding domain occupies Glu-476 to Lys-516. A glycan (N-linked (GlcNAc...) asparagine) is linked at Asn-511. The region spanning Ala-517–Glu-547 is the EGF-like 3 domain. The region spanning Asp-549–Tyr-587 is the EGF-like 4; calcium-binding domain. Asn-562 carries N-linked (GlcNAc...) asparagine glycosylation. In terms of domain architecture, EGF-like 5; calcium-binding spans Asp-596 to Ser-631. The N-linked (GlcNAc...) asparagine glycan is linked to Asn-609. VWFC domains are found at residues Gly-632–Asp-687 and Ser-692–Val-750. N-linked (GlcNAc...) asparagine glycosylation is present at Asn-708.

As to quaternary structure, interacts with ATRAID; the interaction promotes osteoblast cell differentiation and mineralization. Homotrimer. Binds to PKC beta-1. Interacts with ROBO3.

The protein resides in the cytoplasm. Its subcellular location is the nucleus envelope. It localises to the secreted. Its function is as follows. Plays a role in the control of cell growth and differentiation. Promotes osteoblast cell differentiation and terminal mineralization. The chain is Protein kinase C-binding protein NELL1 (Nell1) from Rattus norvegicus (Rat).